Consider the following 200-residue polypeptide: Holliday junction branch migration complex subunit RuvA (200 aa).

Residues 1–63 are domain I; it reads MIALVQGRVA…EDSLTLFGFA (63 aa). Residues 64 to 138 form a domain II region; it reads DADERDVFEL…DRLGPAQGAA (75 aa). Residues 138–142 are flexible linker; sequence APAAP. A domain III region spans residues 143–200; it reads VAVDDGADVVDALVGLGWPVRQAQDAVRGVLEDADGTAPDAAGLLRAALRSLAGDARG.

The protein belongs to the RuvA family. As to quaternary structure, homotetramer. Forms an RuvA(8)-RuvB(12)-Holliday junction (HJ) complex. HJ DNA is sandwiched between 2 RuvA tetramers; dsDNA enters through RuvA and exits via RuvB. An RuvB hexamer assembles on each DNA strand where it exits the tetramer. Each RuvB hexamer is contacted by two RuvA subunits (via domain III) on 2 adjacent RuvB subunits; this complex drives branch migration. In the full resolvosome a probable DNA-RuvA(4)-RuvB(12)-RuvC(2) complex forms which resolves the HJ.

Its subcellular location is the cytoplasm. Functionally, the RuvA-RuvB-RuvC complex processes Holliday junction (HJ) DNA during genetic recombination and DNA repair, while the RuvA-RuvB complex plays an important role in the rescue of blocked DNA replication forks via replication fork reversal (RFR). RuvA specifically binds to HJ cruciform DNA, conferring on it an open structure. The RuvB hexamer acts as an ATP-dependent pump, pulling dsDNA into and through the RuvAB complex. HJ branch migration allows RuvC to scan DNA until it finds its consensus sequence, where it cleaves and resolves the cruciform DNA. This is Holliday junction branch migration complex subunit RuvA from Beutenbergia cavernae (strain ATCC BAA-8 / DSM 12333 / CCUG 43141 / JCM 11478 / NBRC 16432 / NCIMB 13614 / HKI 0122).